A 633-amino-acid chain; its full sequence is DNA mismatch repair protein MutL (633 aa).

It belongs to the DNA mismatch repair MutL/HexB family.

This protein is involved in the repair of mismatches in DNA. It is required for dam-dependent methyl-directed DNA mismatch repair. May act as a 'molecular matchmaker', a protein that promotes the formation of a stable complex between two or more DNA-binding proteins in an ATP-dependent manner without itself being part of a final effector complex. The chain is DNA mismatch repair protein MutL from Bacillus pumilus (strain SAFR-032).